The primary structure comprises 38 residues: MAKRGFNCLLLSISEIDLPVKRLESPNKTRRPYGASIY.

In terms of tissue distribution, in the testis, expressed in Leydig cells at 10, 20 and 60 days of age (at protein level). Also expressed in pachytene spermatocytes at day 20 and in vessels, peritubular cells and spermatids at day 60. Not detected in Sertoli cells (at protein level). In the adult ovary, expressed in stromal cells, granulosa cells, theca cells and oocytes at diestrus and proestrus (at protein level). Expressed in the anterior pituitary where it is detected in lactotropes and somatotropes with lower levels in females than males (at protein level). In the hippocampus, expressed in astrocytes but not in neurons or oligodendrocytes (at protein level). Expressed in muscle, liver and hypothalamus but not in epididymal fat (at protein level). Widely expressed with highest levels in cardiac and skeletal muscle and lowest levels in lung, testis and uterus. In the CNS, levels are relatively high in the cerebellum and cortex and low in the hippocampus. In the hippocampus, lower levels are detected in ovariectomized animals than in controls.

The protein localises to the mitochondrion. Its subcellular location is the secreted. The protein resides in the cytoplasm. Plays a role as a neuroprotective factor. Protects against neuronal cell death induced by amyloid-beta peptides. Also protects against excitotoxic cell death. Prevents amyloid-beta peptide-induced spatial learning and memory impairments, protects against amyloid-beta peptide-induced suppression of hippocampal long-term potentiation, and inhibits amyloid-beta peptide-induced activation of STAT3 and inhibition of CASP3. Prevents glutamate-induced dendritic atrophy in hippocampal neurons and also prevents glutamate-induced decrease in SYP puncta number and total puncta area. Protects anterior pituitary cells from TNF-induced apoptosis. Plays a role in ovarian follicle development by acting as a cryoprotective factor for granulosa cells in the antral follicle. Increases androgen production in Leydig cells and promotes Leydig cell survival by preventing apoptosis. The sequence is that of Humanin-like protein from Rattus norvegicus (Rat).